A 338-amino-acid polypeptide reads, in one-letter code: MKISIYGAGNQRLYLEQLKVPEKFGGEPPYGGAGMAIEFAKAGHDVVLSEPNRDVMSDDLWKKVEDAGVKVVSDDIEAAKHGEIHVLFTPFGRITLNIANTIIEHVPENAIICNTCTIPTPVLYRSLEGILRLKRRDVGISSMHPTGVPGTPSQKYYTIAGKALEGKEYATEDQINKLVELVKSVGKIPYVTPADVVPAVADMGALVTAVALVGVLDYYRVGTQIINAPKDMIEKQILISLQTIASIIETSGMEGLMKVFNKDALLSSAKNMLIDERQEDLNLALKIIEEFDKSTIGEKDISQTYLVAPQALIKEAVSLIGKSAVEGMIRRSSNKLFK.

Belongs to the HMD family.

The protein is H(2)-forming methylenetetrahydromethanopterin dehydrogenase-related protein MJ0715 of Methanocaldococcus jannaschii (strain ATCC 43067 / DSM 2661 / JAL-1 / JCM 10045 / NBRC 100440) (Methanococcus jannaschii).